The primary structure comprises 292 residues: tRNA-cytidine(32) 2-sulfurtransferase (292 aa).

The PP-loop motif motif lies at 53–58 (SGGKDS). Positions 128, 131, and 219 each coordinate [4Fe-4S] cluster.

Belongs to the TtcA family. As to quaternary structure, homodimer. The cofactor is Mg(2+). It depends on [4Fe-4S] cluster as a cofactor.

It is found in the cytoplasm. The catalysed reaction is cytidine(32) in tRNA + S-sulfanyl-L-cysteinyl-[cysteine desulfurase] + AH2 + ATP = 2-thiocytidine(32) in tRNA + L-cysteinyl-[cysteine desulfurase] + A + AMP + diphosphate + H(+). It functions in the pathway tRNA modification. In terms of biological role, catalyzes the ATP-dependent 2-thiolation of cytidine in position 32 of tRNA, to form 2-thiocytidine (s(2)C32). The sulfur atoms are provided by the cysteine/cysteine desulfurase (IscS) system. The protein is tRNA-cytidine(32) 2-sulfurtransferase of Cereibacter sphaeroides (strain ATCC 17029 / ATH 2.4.9) (Rhodobacter sphaeroides).